Consider the following 166-residue polypeptide: Cold-inducible RNA-binding protein B (166 aa).

The region spanning 5–83 is the RRM domain; it reads GKLFIGGLNF…RQIRVDQAGK (79 aa). The disordered stretch occupies residues 68–166; sequence GKAVDGRQIR…DSYDSYATHE (99 aa). Residues 92 to 115 show a composition bias toward gly residues; it reads YRGGSSGGRGFFRGGRGRGGGDRG. The span at 133-149 shows a compositional bias: low complexity; it reads GSRDYYSSGRSQGSYGD. Basic and acidic residues predominate over residues 157 to 166; sequence DSYDSYATHE.

In terms of assembly, interacts with prmt1. Interacts with elavl1/elrA (via RRM3). Associates with ribosomes. In terms of processing, methylated on arginine residues within RGG motifs. Methylation by prmt1 promotes cytoplasmic accumulation. In adults, most abundant in testis, ovary, brain and liver, with lower expression in kidney and heart.

The protein resides in the nucleus. It is found in the nucleoplasm. Its subcellular location is the cytoplasm. In terms of biological role, cold-inducible mRNA binding protein. Acts cooperatively with elavl1/elrA to stabilize AU-rich element (ARE)-containing mRNAs by binding to them and inhibiting their deadenylation. Essential for embryonic gastrulation and neural development, acting to maintain the expression of a set of adhesion molecules, and cell movement during embryogenesis. Required for pronephros development. The chain is Cold-inducible RNA-binding protein B (cirbp-b) from Xenopus laevis (African clawed frog).